A 131-amino-acid chain; its full sequence is Small ribosomal subunit protein uS8 (131 aa).

It belongs to the universal ribosomal protein uS8 family. As to quaternary structure, part of the 30S ribosomal subunit. Contacts proteins S5 and S12.

In terms of biological role, one of the primary rRNA binding proteins, it binds directly to 16S rRNA central domain where it helps coordinate assembly of the platform of the 30S subunit. In Nitrosomonas europaea (strain ATCC 19718 / CIP 103999 / KCTC 2705 / NBRC 14298), this protein is Small ribosomal subunit protein uS8.